The sequence spans 80 residues: Large ribosomal subunit protein uL29 (80 aa).

It belongs to the universal ribosomal protein uL29 family.

This is Large ribosomal subunit protein uL29 from Saccharopolyspora erythraea (strain ATCC 11635 / DSM 40517 / JCM 4748 / NBRC 13426 / NCIMB 8594 / NRRL 2338).